A 139-amino-acid polypeptide reads, in one-letter code: Oocyte zinc finger protein XlCOF14 (139 aa).

C2H2-type zinc fingers lie at residues 6-28, 33-55, 61-83, 89-111, and 117-139; these read FICS…SNVH, FPCT…QKIH, HKCT…HLSH, FSCF…QLSH, and FVCS…CHIH.

The protein belongs to the krueppel C2H2-type zinc-finger protein family.

It localises to the nucleus. Functionally, may be involved in transcriptional regulation. This is Oocyte zinc finger protein XlCOF14 from Xenopus laevis (African clawed frog).